Consider the following 538-residue polypeptide: T-complex protein 1 subunit epsilon (538 aa).

The protein belongs to the TCP-1 chaperonin family. Heterooligomeric complex of about 850 to 900 kDa that forms two stacked rings, 12 to 16 nm in diameter.

It is found in the cytoplasm. Functionally, molecular chaperone; assists the folding of proteins upon ATP hydrolysis. Known to play a role, in vitro, in the folding of actin and tubulin. This is T-complex protein 1 subunit epsilon (cct5) from Dictyostelium discoideum (Social amoeba).